A 269-amino-acid chain; its full sequence is Shikimate dehydrogenase (NADP(+)) (269 aa).

Shikimate is bound by residues 17–19 (SKS) and Thr64. The Proton acceptor role is filled by Lys68. Glu80 contributes to the NADP(+) binding site. Shikimate is bound by residues Asn89 and Asp105. NADP(+) is bound by residues 130 to 134 (GAGGA), 154 to 159 (NRTHTK), and Met213. Tyr215 lines the shikimate pocket. Gly237 is an NADP(+) binding site.

It belongs to the shikimate dehydrogenase family. Homodimer.

The catalysed reaction is shikimate + NADP(+) = 3-dehydroshikimate + NADPH + H(+). It participates in metabolic intermediate biosynthesis; chorismate biosynthesis; chorismate from D-erythrose 4-phosphate and phosphoenolpyruvate: step 4/7. Its function is as follows. Involved in the biosynthesis of the chorismate, which leads to the biosynthesis of aromatic amino acids. Catalyzes the reversible NADPH linked reduction of 3-dehydroshikimate (DHSA) to yield shikimate (SA). The sequence is that of Shikimate dehydrogenase (NADP(+)) from Neisseria mucosa.